A 242-amino-acid chain; its full sequence is ATP synthase subunit a (242 aa).

The next 6 membrane-spanning stretches (helical) occupy residues 29–49 (SAVAMIFVSIAASLLLIIAFV), 83–103 (VFFPLILTLFLFISLGNIIGM), 114–134 (IIVTFSLAMIVFTTTLVYGIY), 140–160 (FFSLFLPKNIPLWLAPIMVII), 181–201 (VAGHILLKIIAWSIVSLTWFF), and 206–226 (IALVIVLIGFELFISILQAYI).

It belongs to the ATPase A chain family. As to quaternary structure, F-type ATPases have 2 components, CF(1) - the catalytic core - and CF(0) - the membrane proton channel. CF(1) has five subunits: alpha(3), beta(3), gamma(1), delta(1), epsilon(1). CF(0) has three main subunits: a(1), b(2) and c(9-12). The alpha and beta chains form an alternating ring which encloses part of the gamma chain. CF(1) is attached to CF(0) by a central stalk formed by the gamma and epsilon chains, while a peripheral stalk is formed by the delta and b chains.

It localises to the cell inner membrane. In terms of biological role, key component of the proton channel; it plays a direct role in the translocation of protons across the membrane. The polypeptide is ATP synthase subunit a (Orientia tsutsugamushi (strain Boryong) (Rickettsia tsutsugamushi)).